The primary structure comprises 269 residues: Microtubule-associated protein RP/EB family member 1 (269 aa).

In terms of domain architecture, Calponin-homology (CH) spans 14 to 116 (NLSRHDMLAW…FVQWFKKFFD (103 aa)). The tract at residues 168–190 (RTAVSNKPPAQGISKKPATVGNG) is disordered. In terms of domain architecture, EB1 C-terminal spans 186–256 (TVGNGDDESA…LYATDEGFVI (71 aa)).

Belongs to the MAPRE family.

It localises to the cytoplasm. The protein localises to the cytoskeleton. It is found in the microtubule organizing center. Its subcellular location is the centrosome. The protein resides in the golgi apparatus. It localises to the spindle. The protein localises to the spindle pole. In terms of biological role, plus-end tracking protein (+TIP) that binds to the plus-end of microtubules and regulates the dynamics of the microtubule cytoskeleton. Promotes cytoplasmic microtubule nucleation and elongation. Involved in mitotic spindle positioning by stabilizing microtubules and promoting dynamic connection between astral microtubules and the cortex during mitotic chromosome segregation. The chain is Microtubule-associated protein RP/EB family member 1 (mapre1) from Xenopus tropicalis (Western clawed frog).